A 257-amino-acid chain; its full sequence is NAD-capped RNA hydrolase NudC (257 aa).

Substrate-binding residues include Lys25 and Arg69. Zn(2+)-binding residues include Cys98 and Cys101. Residue Glu111 participates in substrate binding. The Zn(2+) site is built by Cys116 and Cys119. Tyr124 is a substrate binding site. A Nudix hydrolase domain is found at 125–248 (PQIAPCIIVA…TVARRLIEDT (124 aa)). The a divalent metal cation site is built by Ala158, Glu174, and Glu178. The Nudix box motif lies at 159-180 (GFVEVGETLEQAVAREVMEESG). Substrate is bound at residue 192 to 199 (QPWPFPQS). Glu219 is a binding site for a divalent metal cation. Ala241 is a binding site for substrate.

This sequence belongs to the Nudix hydrolase family. NudC subfamily. As to quaternary structure, homodimer. Mg(2+) serves as cofactor. The cofactor is Mn(2+). Requires Zn(2+) as cofactor.

The catalysed reaction is a 5'-end NAD(+)-phospho-ribonucleoside in mRNA + H2O = a 5'-end phospho-adenosine-phospho-ribonucleoside in mRNA + beta-nicotinamide D-ribonucleotide + 2 H(+). It catalyses the reaction NAD(+) + H2O = beta-nicotinamide D-ribonucleotide + AMP + 2 H(+). The enzyme catalyses NADH + H2O = reduced beta-nicotinamide D-ribonucleotide + AMP + 2 H(+). Its function is as follows. mRNA decapping enzyme that specifically removes the nicotinamide adenine dinucleotide (NAD) cap from a subset of mRNAs by hydrolyzing the diphosphate linkage to produce nicotinamide mononucleotide (NMN) and 5' monophosphate mRNA. The NAD-cap is present at the 5'-end of some mRNAs and stabilizes RNA against 5'-processing. Has preference for mRNAs with a 5'-end purine. Catalyzes the hydrolysis of a broad range of dinucleotide pyrophosphates. The protein is NAD-capped RNA hydrolase NudC of Shigella flexneri.